The following is a 95-amino-acid chain: Integration host factor subunit beta (95 aa).

The protein belongs to the bacterial histone-like protein family. Heterodimer of an alpha and a beta chain.

Functionally, this protein is one of the two subunits of integration host factor, a specific DNA-binding protein that functions in genetic recombination as well as in transcriptional and translational control. The chain is Integration host factor subunit beta from Shewanella halifaxensis (strain HAW-EB4).